Consider the following 80-residue polypeptide: U-actitoxin-Avd9a (80 aa).

Residues 1–20 form the signal peptide; the sequence is MNLKVLAVFVLCAILVVVTA. The propeptide occupies 21 to 39; it reads ERRGTETGVYKKDTLQDLI. One can recognise a ShKT domain in the interval 45–80; sequence CIDRFPTGTCKQVKKGGSCKNSDKYRMNCRKTCGLC. 3 disulfide bridges follow: cysteine 45/cysteine 80, cysteine 54/cysteine 73, and cysteine 63/cysteine 77. Positions 68–69 are crucial for binding to potassium channels; sequence KY.

It belongs to the sea anemone type 1 potassium channel toxin family. Type 1b subfamily.

The protein resides in the secreted. Its subcellular location is the nematocyst. Inhibits voltage-gated potassium channels (Kv1/KCNA). This Anemonia viridis (Snakelocks anemone) protein is U-actitoxin-Avd9a.